The chain runs to 267 residues: Eukaryotic translation initiation factor 3 subunit J (267 aa).

Disordered regions lie at residues 1–118 and 221–241; these read MAPS…DLKH and MREE…KTKV. Acidic residues predominate over residues 28–46; that stretch reads DEEEEDVLDSWDAAEDSEV. Residues 44-99 adopt a coiled-coil conformation; sequence SEVEREKAAKAAAAAAKAEAEAAAKKKSKAQRIEERKQERKKLAEANESDEDSEED. The span at 74–88 shows a compositional bias: basic and acidic residues; sequence QRIEERKQERKKLAE. Positions 90-100 are enriched in acidic residues; the sequence is NESDEDSEEDE. Basic and acidic residues-rich tracts occupy residues 108–118 and 221–231; these read RRTEKEGDLKH and MREERAADKGN.

It belongs to the eIF-3 subunit J family. In terms of assembly, component of the eukaryotic translation initiation factor 3 (eIF-3) complex.

It is found in the cytoplasm. In terms of biological role, component of the eukaryotic translation initiation factor 3 (eIF-3) complex, which is involved in protein synthesis of a specialized repertoire of mRNAs and, together with other initiation factors, stimulates binding of mRNA and methionyl-tRNAi to the 40S ribosome. The eIF-3 complex specifically targets and initiates translation of a subset of mRNAs involved in cell proliferation. The chain is Eukaryotic translation initiation factor 3 subunit J (hcr1) from Aspergillus fumigatus (strain CBS 144.89 / FGSC A1163 / CEA10) (Neosartorya fumigata).